The sequence spans 128 residues: Glycine cleavage system H protein (128 aa).

Positions 25 to 107 (TITVGITHHA…YGAGWFFKIK (83 aa)) constitute a Lipoyl-binding domain. Lys66 carries the N6-lipoyllysine modification.

Belongs to the GcvH family. As to quaternary structure, the glycine cleavage system is composed of four proteins: P, T, L and H. (R)-lipoate serves as cofactor.

In terms of biological role, the glycine cleavage system catalyzes the degradation of glycine. The H protein shuttles the methylamine group of glycine from the P protein to the T protein. The polypeptide is Glycine cleavage system H protein (Neisseria meningitidis serogroup C (strain 053442)).